We begin with the raw amino-acid sequence, 180 residues long: Inner membrane-spanning protein YciB (180 aa).

The next 6 membrane-spanning stretches (helical) occupy residues 4–24 (LLSE…GGGI), 25–45 (QSAT…CYII), 52–72 (LSII…ISGD), 76–96 (IKIK…TSGI), 118–138 (ITLS…NEIV), and 150–170 (FKVF…LPLL).

Belongs to the YciB family.

The protein localises to the cell inner membrane. In terms of biological role, plays a role in cell envelope biogenesis, maintenance of cell envelope integrity and membrane homeostasis. This is Inner membrane-spanning protein YciB from Rickettsia bellii (strain RML369-C).